The sequence spans 188 residues: Ribosome-recycling factor (188 aa).

The protein belongs to the RRF family.

It is found in the cytoplasm. Its function is as follows. Responsible for the release of ribosomes from messenger RNA at the termination of protein biosynthesis. May increase the efficiency of translation by recycling ribosomes from one round of translation to another. This is Ribosome-recycling factor from Cereibacter sphaeroides (strain ATCC 17025 / ATH 2.4.3) (Rhodobacter sphaeroides).